A 706-amino-acid polypeptide reads, in one-letter code: Centrosomal protein kizuna (706 aa).

Residues 63-113 (QRAKTRNLELLGNVENLASKLKEFSIDCSRLLQKRMEYKNHITRLKKDRRK) adopt a coiled-coil conformation. The segment covering 105–116 (TRLKKDRRKMGS) has biased composition (basic residues). 5 disordered regions span residues 105 to 184 (TRLK…LCMH), 215 to 347 (VREK…ASRG), 571 to 603 (EIKPARPSGTNAQTGEEQEIQSAEEDSADQSPV), 620 to 665 (SVAQ…KTKP), and 677 to 706 (ESDDSNSEIEMALRPQSCNTSSHDFDDFYD). Residues 118–127 (GKSEADEHPS) are compositionally biased toward basic and acidic residues. Composition is skewed to polar residues over residues 128-156 (RLSTQGLSQSAAIFMGHQTSNGSSRNDGA) and 164-180 (HTEQIPNHPSLPPSQSG). The segment covering 215–251 (VREKQMESDWDISQRAREQQRQEELKSPHTTLKEAEV) has biased composition (basic and acidic residues). Residues 272–283 (TRSPSPDTTDPS) show a composition bias toward low complexity. The segment covering 293-304 (GEDEEESAEDKD) has biased composition (acidic residues). Over residues 308-320 (PINQNHSDYTSNI) the composition is skewed to polar residues. Residues 586–598 (EEQEIQSAEEDSA) are compositionally biased toward acidic residues. Over residues 638 to 648 (PDAHKLEKPEV) the composition is skewed to basic and acidic residues.

It belongs to the kizuna family.

The protein localises to the cytoplasm. It localises to the cytoskeleton. Its subcellular location is the microtubule organizing center. The protein resides in the centrosome. It is found in the cilium basal body. Its function is as follows. Centrosomal protein required for establishing a robust mitotic centrosome architecture that can endure the forces that converge on the centrosomes during spindle formation. Required for stabilizing the expanded pericentriolar material around the centriole. This chain is Centrosomal protein kizuna (kiz), found in Danio rerio (Zebrafish).